Consider the following 191-residue polypeptide: Small ribosomal subunit protein uS5 (191 aa).

Residues 1–21 (MAAERERGGRERSREREERDS) are disordered. The S5 DRBM domain maps to 23 to 86 (FVDKLVHINR…ESAKRNLTRV (64 aa)).

In terms of assembly, part of the 30S ribosomal subunit. Contacts proteins S4 and S8.

Its function is as follows. With S4 and S12 plays an important role in translational accuracy. In terms of biological role, located at the back of the 30S subunit body where it stabilizes the conformation of the head with respect to the body. The chain is Small ribosomal subunit protein uS5 from Rhodopseudomonas palustris (strain ATCC BAA-98 / CGA009).